The primary structure comprises 583 residues: Aspartate--tRNA(Asp/Asn) ligase (583 aa).

Glu-172 provides a ligand contact to L-aspartate. The segment at Gln-196–Lys-199 is aspartate. Arg-218 contacts L-aspartate. Residues Arg-218–Glu-220 and Gln-227 each bind ATP. Position 446 (His-446) interacts with L-aspartate. Glu-480 contributes to the ATP binding site. Position 487 (Arg-487) interacts with L-aspartate. Gly-532–Arg-535 is an ATP binding site.

The protein belongs to the class-II aminoacyl-tRNA synthetase family. Type 1 subfamily. Homodimer.

Its subcellular location is the cytoplasm. It catalyses the reaction tRNA(Asx) + L-aspartate + ATP = L-aspartyl-tRNA(Asx) + AMP + diphosphate. Its function is as follows. Aspartyl-tRNA synthetase with relaxed tRNA specificity since it is able to aspartylate not only its cognate tRNA(Asp) but also tRNA(Asn). Reaction proceeds in two steps: L-aspartate is first activated by ATP to form Asp-AMP and then transferred to the acceptor end of tRNA(Asp/Asn). In Streptococcus mutans serotype c (strain ATCC 700610 / UA159), this protein is Aspartate--tRNA(Asp/Asn) ligase.